Here is a 652-residue protein sequence, read N- to C-terminus: Adhesion G protein-coupled receptor E3 (652 aa).

An N-terminal signal peptide occupies residues 1-21 (MQGPLLLPGLCFLLSLFGAVT). The Extracellular segment spans residues 22 to 357 (QKTKTSCAKC…TSQEEDPVLT (336 aa)). The 43-residue stretch at 24–66 (TKTSCAKCPPNASCVNNTHCTCNHGYTSGSGQKLFTFPLETCN) folds into the EGF-like 1 domain. Cystine bridges form between Cys-28/Cys-37, Cys-31/Cys-43, Cys-45/Cys-65, Cys-71/Cys-85, Cys-79/Cys-94, and Cys-96/Cys-117. Residues Asn-34 and Asn-39 are each glycosylated (N-linked (GlcNAc...) asparagine). Positions 67–118 (DINECTPPYSVYCGFNAVCYNVEGSFYCQCVPGYRLHSGNEQFSNSNENTCQ) constitute an EGF-like 2; calcium-binding domain. N-linked (GlcNAc...) asparagine glycosylation is found at Asn-145, Asn-189, Asn-202, Asn-250, Asn-279, Asn-327, and Asn-334. The 169-residue stretch at 183–351 (KVLKIQNDSV…AVLMALTSQE (169 aa)) folds into the GAIN-B domain. Intrachain disulfides connect Cys-304–Cys-333 and Cys-321–Cys-335. A GPS region spans residues 304–351 (CVYWKSTGQGSQWSRDGCFLIHVNKSHTMCNCSHLSSFAVLMALTSQE). A helical transmembrane segment spans residues 358–378 (VITYVGLSVSLLCLLLAALTF). The Cytoplasmic portion of the chain corresponds to 379-389 (LLCKAIRNTST). The chain crosses the membrane as a helical span at residues 390–410 (SLHLQLSLCLFLAHLLFLVGI). Topologically, residues 411 to 416 (DRTEPK) are extracellular. The helical transmembrane segment at 417 to 437 (VLCSIIAGALHYLYLAAFTWM) threads the bilayer. Residues 438 to 464 (LLEGVHLFLTARNLTVVNYSSINRLMK) lie on the Cytoplasmic side of the membrane. A helical transmembrane segment spans residues 465–485 (WIMFPVGYGVPAVTVAISAAS). At 486–508 (WPHLYGTADRCWLHLDQGFMWSF) the chain is on the extracellular side. The chain crosses the membrane as a helical span at residues 509–529 (LGPVCAIFSANLVLFILVFWI). Topologically, residues 530-557 (LKRKLSSLNSEVSTIQNTRMLAFKATAQ) are cytoplasmic. Residues 558 to 578 (LFILGCTWCLGLLQVGPAAQV) traverse the membrane as a helical segment. Residues 579 to 580 (MA) lie on the Extracellular side of the membrane. The chain crosses the membrane as a helical span at residues 581–601 (YLFTIINSLQGFFIFLVYCLL). Residues 602 to 652 (SQQVQKQYQKWFREIVKSKSESETYTLSSKMGPDSKPSEGDVFPGQVKRKY) are Cytoplasmic-facing. Residues 621–652 (SESETYTLSSKMGPDSKPSEGDVFPGQVKRKY) are disordered.

It belongs to the G-protein coupled receptor 2 family. Adhesion G-protein coupled receptor (ADGR) subfamily. As to quaternary structure, forms a heterodimer, consisting of a large extracellular region (alpha subunit) non-covalently linked to a seven-transmembrane moiety (beta subunit). Proteolytically cleaved into 2 subunits, an extracellular alpha subunit and a seven-transmembrane subunit. Displays a predominantly leukocyte-restricted expression, with highest levels in neutrophils, monocytes and macrophages.

Its subcellular location is the cell membrane. It is found in the secreted. Functionally, orphan receptor that may play a role myeloid-myeloid interactions during immune and inflammatory responses. A ligand for the soluble form of this receptor is present at the surface of monocytes-derived macrophages and activated neutrophils. The sequence is that of Adhesion G protein-coupled receptor E3 from Homo sapiens (Human).